The primary structure comprises 85 residues: Large ribosomal subunit protein bL27 (85 aa).

Residues 1-25 (MAHKKAGGSSRNGRDSHSKRLGVKH) form a disordered region.

It belongs to the bacterial ribosomal protein bL27 family.

The polypeptide is Large ribosomal subunit protein bL27 (Buchnera aphidicola subsp. Baizongia pistaciae (strain Bp)).